Consider the following 698-residue polypeptide: MIPVADLTEAEAARELERLAAEIARHDRLYHQQDAPEITDGEYDALVRRNNEIEAAFPELVRGDSPSAHVGAAPAEGFAKVTHALPMLSLGNVFSDDEAREFDQRIRRFLSLDGETTISYVAEPKIDGLSFSARYENGVYRRAATRGDGTTGEDITANLATLTDLPQRLTGDGPVPEVLEVRGEVFMTKADFRALNQRQIDAGAKPFANPRNAAAGSLRQLDPEITRSRSLSLFAYASGEVKGLEVESHHAFLERLKTWGFPVNPQTRPCQGVEDLIEATHALALQRAALDYDIDGVVYKVDRVDWQKRLGFVSRAPRWAIARKFPAERAQTTVKAIQIQVGRTGTLTPVAILEPVTVGGVVVGRATLHNEDEIARKDVRIGDMVTIQRAGDVIPQVVEVLLDQRPADSAPFVFPETCPVCGSHAVRQEGEVARRCAGGLICSAQAVERLKHFVSRDAFDIEGLGGKHIETFHNEGLITQPADIFALEAKDNEPGALQHLRSREGWGPKSAENLFKAITARKTIPLDRFIYALGIRQVGQATARLLAGHYASFAAWRKAMDEAQTEGSEAFADLQNIESIGPSVARDLVAFFGEEHNRAALDALIDAGVEVLDFARPQAAGDSPLAGKTVVFTGTLDTMSRGEAKARALALGAKVTGSVSAKTDYVVVGADAGSKEKKARELGLTVLSEAEFRAMSGG.

Residues 40–44 (DGEYD), 89–90 (SL), and Glu123 each bind NAD(+). The N6-AMP-lysine intermediate role is filled by Lys125. NAD(+) is bound by residues Arg146, Glu184, Lys300, and Lys324. Cys418, Cys421, Cys436, and Cys442 together coordinate Zn(2+). In terms of domain architecture, BRCT spans 620–698 (AGDSPLAGKT…EAEFRAMSGG (79 aa)).

This sequence belongs to the NAD-dependent DNA ligase family. LigA subfamily. Mg(2+) serves as cofactor. Requires Mn(2+) as cofactor.

The catalysed reaction is NAD(+) + (deoxyribonucleotide)n-3'-hydroxyl + 5'-phospho-(deoxyribonucleotide)m = (deoxyribonucleotide)n+m + AMP + beta-nicotinamide D-nucleotide.. DNA ligase that catalyzes the formation of phosphodiester linkages between 5'-phosphoryl and 3'-hydroxyl groups in double-stranded DNA using NAD as a coenzyme and as the energy source for the reaction. It is essential for DNA replication and repair of damaged DNA. This Rhodospirillum rubrum (strain ATCC 11170 / ATH 1.1.1 / DSM 467 / LMG 4362 / NCIMB 8255 / S1) protein is DNA ligase.